The following is a 399-amino-acid chain: GDP-D-glucose phosphorylase 1 (399 aa).

His-237 functions as the Tele-GMP-histidine intermediate in the catalytic mechanism.

The protein belongs to the GDPGP1 family.

Its subcellular location is the cytoplasm. It carries out the reaction GDP-alpha-D-glucose + phosphate = alpha-D-glucose 1-phosphate + GDP + H(+). Functionally, specific and highly efficient GDP-D-glucose phosphorylase regulating the levels of GDP-D-glucose in cells. The chain is GDP-D-glucose phosphorylase 1 (gdpgp1) from Xenopus laevis (African clawed frog).